A 449-amino-acid polypeptide reads, in one-letter code: 23S rRNA (uracil(1939)-C(5))-methyltransferase RlmD (449 aa).

The TRAM domain maps to 1 to 66 (MGRSRHHNKL…AKFDEAKVVE (66 aa)). Positions 79, 85, 88, and 169 each coordinate [4Fe-4S] cluster. Residues Q280, F309, N314, E330, N357, and D379 each contribute to the S-adenosyl-L-methionine site. C405 functions as the Nucleophile in the catalytic mechanism.

This sequence belongs to the class I-like SAM-binding methyltransferase superfamily. RNA M5U methyltransferase family. RlmD subfamily.

The catalysed reaction is uridine(1939) in 23S rRNA + S-adenosyl-L-methionine = 5-methyluridine(1939) in 23S rRNA + S-adenosyl-L-homocysteine + H(+). Catalyzes the formation of 5-methyl-uridine at position 1939 (m5U1939) in 23S rRNA. The protein is 23S rRNA (uracil(1939)-C(5))-methyltransferase RlmD of Francisella tularensis subsp. novicida (strain U112).